The primary structure comprises 253 residues: Tetraspanin-3 (253 aa).

The Cytoplasmic portion of the chain corresponds to 1 to 11; it reads MGQCGITSSKT. The helical transmembrane segment at 12 to 32 threads the bilayer; that stretch reads VLVFLNLIFWGAAGILCYVGA. The Extracellular portion of the chain corresponds to 33-50; it reads YVFITYDDYDHFFEDVYT. The helical transmembrane segment at 51-71 threads the bilayer; that stretch reads LIPAVVIIAVGALLFIIGLIG. The Cytoplasmic segment spans residues 72-85; the sequence is CCATIRESRCGLAT. A helical membrane pass occupies residues 86 to 106; the sequence is FVIILLLVFVTEVVVVVLGYV. Topologically, residues 107–212 are extracellular; that stretch reads YRAKVENEVD…KKLQEIMMHV (106 aa). Asn127, Asn152, Asn167, and Asn183 each carry an N-linked (GlcNAc...) asparagine glycan. The chain crosses the membrane as a helical span at residues 213–233; it reads IWAALAFAAIQLLGMLCACIV. Residues 234 to 253 are Cytoplasmic-facing; the sequence is LCRRSRDPAYELLITGGTYA.

It belongs to the tetraspanin (TM4SF) family. Interacts with claudin-11/CLDN11 and integrins.

The protein resides in the membrane. Its function is as follows. Regulates the proliferation and migration of oligodendrocytes, a process essential for normal myelination and repair. This is Tetraspanin-3 (TSPAN3) from Homo sapiens (Human).